A 186-amino-acid chain; its full sequence is Imidazole glycerol phosphate synthase subunit HisH (186 aa).

In terms of domain architecture, Glutamine amidotransferase type-1 spans Met-1–Ala-186. Cys-72 (nucleophile) is an active-site residue. Catalysis depends on residues His-167 and Glu-169.

As to quaternary structure, heterodimer of HisH and HisF.

The protein resides in the cytoplasm. It carries out the reaction 5-[(5-phospho-1-deoxy-D-ribulos-1-ylimino)methylamino]-1-(5-phospho-beta-D-ribosyl)imidazole-4-carboxamide + L-glutamine = D-erythro-1-(imidazol-4-yl)glycerol 3-phosphate + 5-amino-1-(5-phospho-beta-D-ribosyl)imidazole-4-carboxamide + L-glutamate + H(+). It catalyses the reaction L-glutamine + H2O = L-glutamate + NH4(+). It participates in amino-acid biosynthesis; L-histidine biosynthesis; L-histidine from 5-phospho-alpha-D-ribose 1-diphosphate: step 5/9. IGPS catalyzes the conversion of PRFAR and glutamine to IGP, AICAR and glutamate. The HisH subunit catalyzes the hydrolysis of glutamine to glutamate and ammonia as part of the synthesis of IGP and AICAR. The resulting ammonia molecule is channeled to the active site of HisF. The polypeptide is Imidazole glycerol phosphate synthase subunit HisH (Picrophilus torridus (strain ATCC 700027 / DSM 9790 / JCM 10055 / NBRC 100828 / KAW 2/3)).